The following is a 177-amino-acid chain: Peptide methionine sulfoxide reductase MsrA 2 (177 aa).

Residue C12 is part of the active site.

It belongs to the MsrA Met sulfoxide reductase family.

The enzyme catalyses L-methionyl-[protein] + [thioredoxin]-disulfide + H2O = L-methionyl-(S)-S-oxide-[protein] + [thioredoxin]-dithiol. The catalysed reaction is [thioredoxin]-disulfide + L-methionine + H2O = L-methionine (S)-S-oxide + [thioredoxin]-dithiol. Functionally, has an important function as a repair enzyme for proteins that have been inactivated by oxidation. Catalyzes the reversible oxidation-reduction of methionine sulfoxide in proteins to methionine. The chain is Peptide methionine sulfoxide reductase MsrA 2 from Staphylococcus aureus (strain MRSA252).